We begin with the raw amino-acid sequence, 275 residues long: NAD kinase (275 aa).

Aspartate 68 (proton acceptor) is an active-site residue. NAD(+) contacts are provided by residues aspartate 68–glycine 69, arginine 73, asparagine 136–glutamate 137, lysine 147, arginine 164, aspartate 166, threonine 177–serine 182, alanine 201, and glutamine 236.

It belongs to the NAD kinase family. It depends on a divalent metal cation as a cofactor.

It is found in the cytoplasm. It carries out the reaction NAD(+) + ATP = ADP + NADP(+) + H(+). Involved in the regulation of the intracellular balance of NAD and NADP, and is a key enzyme in the biosynthesis of NADP. Catalyzes specifically the phosphorylation on 2'-hydroxyl of the adenosine moiety of NAD to yield NADP. This is NAD kinase from Methanosarcina acetivorans (strain ATCC 35395 / DSM 2834 / JCM 12185 / C2A).